A 244-amino-acid chain; its full sequence is 7-cyano-7-deazaguanine synthase (244 aa).

19–29 (FSGGQDSTTCL) is an ATP binding site. 4 residues coordinate Zn(2+): Cys207, Cys222, Cys225, and Cys228.

The protein belongs to the QueC family. The cofactor is Zn(2+).

The catalysed reaction is 7-carboxy-7-deazaguanine + NH4(+) + ATP = 7-cyano-7-deazaguanine + ADP + phosphate + H2O + H(+). It participates in purine metabolism; 7-cyano-7-deazaguanine biosynthesis. Catalyzes the ATP-dependent conversion of 7-carboxy-7-deazaguanine (CDG) to 7-cyano-7-deazaguanine (preQ(0)). The chain is 7-cyano-7-deazaguanine synthase from Bordetella avium (strain 197N).